The following is a 285-amino-acid chain: Tyrosine recombinase XerA (285 aa).

Residues 7 to 84 (IVNSDILEEF…ALKSYFKFEG (78 aa)) form the Core-binding (CB) domain. One can recognise a Tyr recombinase domain in the interval 100–274 (SLPKSLTEDE…TTKHLREAIE (175 aa)). Active-site residues include Arg135, Lys160, His226, Arg229, and His252. Catalysis depends on Tyr261, which acts as the O-(3'-phospho-DNA)-tyrosine intermediate.

It belongs to the 'phage' integrase family. XerA subfamily.

It localises to the cytoplasm. Functionally, site-specific tyrosine recombinase, which acts by catalyzing the cutting and rejoining of the recombining DNA molecules. The protein is Tyrosine recombinase XerA of Pyrococcus horikoshii (strain ATCC 700860 / DSM 12428 / JCM 9974 / NBRC 100139 / OT-3).